A 165-amino-acid chain; its full sequence is Sporulation thiol-disulfide oxidoreductase A (165 aa).

Residues 1–26 (MLTKRLLTIYIMLLGLIAWFPGAAQA) form the signal peptide. The Thioredoxin domain maps to 27–165 (EEKQPAVPAV…AEQLKEWTEE (139 aa)). Cys65 and Cys68 are disulfide-bonded.

The protein belongs to the thioredoxin family.

It is found in the spore outer membrane. Its function is as follows. Thiol-disulfide oxidoreductase with a reductive function, involved in spore cortex synthesis. It could be involved either in breaking disulfide bonds in cortex components or in proteins that are important for cortex synthesis, or in thiol/disulfide bond interchange. This chain is Sporulation thiol-disulfide oxidoreductase A (stoA), found in Bacillus subtilis (strain 168).